A 457-amino-acid polypeptide reads, in one-letter code: Bifunctional protein GlmU (457 aa).

A pyrophosphorylase region spans residues 1–230 (MSKRYAVVLA…FEESLGVNDR (230 aa)). UDP-N-acetyl-alpha-D-glucosamine-binding positions include 9 to 12 (LAAG), lysine 23, glutamine 73, and 78 to 79 (GT). Aspartate 103 provides a ligand contact to Mg(2+). Glycine 140, glutamate 155, asparagine 170, and asparagine 228 together coordinate UDP-N-acetyl-alpha-D-glucosamine. Asparagine 228 contributes to the Mg(2+) binding site. Positions 231–251 (IALAEASRLMQRRINENHMRN) are linker. An N-acetyltransferase region spans residues 252-457 (GVTLVNPENT…GYAKHLNHGK (206 aa)). UDP-N-acetyl-alpha-D-glucosamine contacts are provided by arginine 333 and lysine 351. Histidine 363 (proton acceptor) is an active-site residue. Tyrosine 366 and asparagine 377 together coordinate UDP-N-acetyl-alpha-D-glucosamine. Acetyl-CoA is bound by residues 386-387 (NY), alanine 423, and arginine 440.

This sequence in the N-terminal section; belongs to the N-acetylglucosamine-1-phosphate uridyltransferase family. In the C-terminal section; belongs to the transferase hexapeptide repeat family. In terms of assembly, homotrimer. Requires Mg(2+) as cofactor.

The protein resides in the cytoplasm. It catalyses the reaction alpha-D-glucosamine 1-phosphate + acetyl-CoA = N-acetyl-alpha-D-glucosamine 1-phosphate + CoA + H(+). The catalysed reaction is N-acetyl-alpha-D-glucosamine 1-phosphate + UTP + H(+) = UDP-N-acetyl-alpha-D-glucosamine + diphosphate. It participates in nucleotide-sugar biosynthesis; UDP-N-acetyl-alpha-D-glucosamine biosynthesis; N-acetyl-alpha-D-glucosamine 1-phosphate from alpha-D-glucosamine 6-phosphate (route II): step 2/2. Its pathway is nucleotide-sugar biosynthesis; UDP-N-acetyl-alpha-D-glucosamine biosynthesis; UDP-N-acetyl-alpha-D-glucosamine from N-acetyl-alpha-D-glucosamine 1-phosphate: step 1/1. It functions in the pathway bacterial outer membrane biogenesis; LPS lipid A biosynthesis. Catalyzes the last two sequential reactions in the de novo biosynthetic pathway for UDP-N-acetylglucosamine (UDP-GlcNAc). The C-terminal domain catalyzes the transfer of acetyl group from acetyl coenzyme A to glucosamine-1-phosphate (GlcN-1-P) to produce N-acetylglucosamine-1-phosphate (GlcNAc-1-P), which is converted into UDP-GlcNAc by the transfer of uridine 5-monophosphate (from uridine 5-triphosphate), a reaction catalyzed by the N-terminal domain. In Listeria monocytogenes serotype 4b (strain CLIP80459), this protein is Bifunctional protein GlmU.